A 159-amino-acid chain; its full sequence is Prs ADP-ribosylating antitoxin (159 aa).

The sufficient to neutralize toxin stretch occupies residues 99 to 159 (EDMVEESGET…LAQIQSGAFA (61 aa)).

Belongs to the MbcA/ParS/Xre antitoxin family. In terms of assembly, forms heterotetrameric ParS(2)-ParT(2) complexes. The 2 antitoxin fragments do not make contact in the crystal structure.

Its function is as follows. Antitoxin component of a type II toxin-antitoxin (TA) system. Neutralizes the bacteriostatic effect of cognate toxin ParT by inserting into its active site. This is Prs ADP-ribosylating antitoxin from Sphingobium sp. (strain YBL2).